The primary structure comprises 371 residues: Histidinol-phosphate aminotransferase (371 aa).

Position 228 is an N6-(pyridoxal phosphate)lysine (lysine 228).

The protein belongs to the class-II pyridoxal-phosphate-dependent aminotransferase family. Histidinol-phosphate aminotransferase subfamily. In terms of assembly, homodimer. The cofactor is pyridoxal 5'-phosphate.

The catalysed reaction is L-histidinol phosphate + 2-oxoglutarate = 3-(imidazol-4-yl)-2-oxopropyl phosphate + L-glutamate. It participates in amino-acid biosynthesis; L-histidine biosynthesis; L-histidine from 5-phospho-alpha-D-ribose 1-diphosphate: step 7/9. The polypeptide is Histidinol-phosphate aminotransferase (Thermosynechococcus vestitus (strain NIES-2133 / IAM M-273 / BP-1)).